We begin with the raw amino-acid sequence, 372 residues long: Delta-type opioid receptor (372 aa).

Over 1-47 (MELVPSARAELQSSPLVNLSDAFPSAFPSAGANASGSPGARSASSLA) the chain is Extracellular. Asn-18 and Asn-33 each carry an N-linked (GlcNAc...) asparagine glycan. The chain crosses the membrane as a helical span at residues 48–75 (LAIAITALYSAVCAVGLLGNVLVMFGIV). The Cytoplasmic segment spans residues 76 to 85 (RYTKLKTATN). The chain crosses the membrane as a helical span at residues 86-110 (IYIFNLALADALATSTLPFQSAKYL). Topologically, residues 111–122 (METWPFGELLCK) are extracellular. A disulfide bridge connects residues Cys-121 and Cys-198. Residues 123–144 (AVLSIDYYNMFTSIFTLTMMSV) traverse the membrane as a helical segment. Residues 145 to 163 (DRYIAVCHPVKALDFRTPA) lie on the Cytoplasmic side of the membrane. Residues 164–186 (KAKLINICIWVLASGVGVPIMVM) traverse the membrane as a helical segment. At 187-206 (AVTQPRDGAVVCMLQFPSPS) the chain is on the extracellular side. The helical transmembrane segment at 207–238 (WYWDTVTKICVFLFAFVVPILIITVCYGLMLL) threads the bilayer. Over 239 to 261 (RLRSVRLLSGSKEKDRSLRRITR) the chain is Cytoplasmic. A helical transmembrane segment spans residues 262–284 (MVLVVVGAFVVCWAPIHIFVIVW). Topologically, residues 285-299 (TLVDINRRDPLVVAA) are extracellular. A helical transmembrane segment spans residues 300–321 (LHLCIALGYANSSLNPVLYAFL). Over 322–372 (DENFKRCFRQLCRTPCGRQEPGSLRRPRQATTRERVTACTPSDGPGGGAAA) the chain is Cytoplasmic. A lipid anchor (S-palmitoyl cysteine) is attached at Cys-333. The interval 340-372 (QEPGSLRRPRQATTRERVTACTPSDGPGGGAAA) is disordered.

It belongs to the G-protein coupled receptor 1 family. As to quaternary structure, may form homooligomers. Forms a heterodimer with OPRM1. Interacts with GPRASP1. Interacts with RTP4; the interaction promotes cell surface localization of the OPRD1-OPRM1 heterodimer. In terms of processing, ubiquitinated. A basal ubiquitination seems not to be related to degradation. Ubiquitination is increased upon formation of OPRM1:OPRD1 oligomers leading to proteasomal degradation; the ubiquitination is diminished by RTP4. In terms of tissue distribution, brain, with high concentrations in the basal ganglia and limbic regions.

The protein resides in the cell membrane. G-protein coupled receptor that functions as a receptor for endogenous enkephalins and for a subset of other opioids. Ligand binding causes a conformation change that triggers signaling via guanine nucleotide-binding proteins (G proteins) and modulates the activity of down-stream effectors, such as adenylate cyclase. Signaling leads to the inhibition of adenylate cyclase activity. Inhibits neurotransmitter release by reducing calcium ion currents and increasing potassium ion conductance. Plays a role in the perception of pain and in opiate-mediated analgesia. Plays a role in developing analgesic tolerance to morphine. The protein is Delta-type opioid receptor (Oprd1) of Mus musculus (Mouse).